Here is a 108-residue protein sequence, read N- to C-terminus: Ig kappa chain V-V region HP R16.7 (108 aa).

The segment at Asp1–Cys23 is framework-1. Cys23 and Cys88 are oxidised to a cystine. Positions Arg24–Asn34 are complementarity-determining-1. The tract at residues Trp35–Tyr49 is framework-2. Residues Tyr50–Ser56 form a complementarity-determining-2 region. Positions Gly57 to Cys88 are framework-3. The segment at Gln89 to Thr97 is complementarity-determining-3. Residues Phe98–Arg108 are framework-4.

In Mus musculus (Mouse), this protein is Ig kappa chain V-V region HP R16.7.